A 290-amino-acid polypeptide reads, in one-letter code: Signal peptidase I (290 aa).

Topologically, residues 1–13 (MKFLRSVYAFCSS) are cytoplasmic. Residues 14–34 (WVGTIIIVLLVIFFIAQAFII) form a helical membrane-spanning segment. Residues 35 to 290 (PSRSMVGTLY…KIIKKEKATH (256 aa)) lie on the Extracellular side of the membrane. Catalysis depends on residues serine 38 and lysine 106.

Belongs to the peptidase S26 family.

It is found in the cell membrane. It catalyses the reaction Cleavage of hydrophobic, N-terminal signal or leader sequences from secreted and periplasmic proteins.. In Helicobacter pylori (strain J99 / ATCC 700824) (Campylobacter pylori J99), this protein is Signal peptidase I (lepB).